Consider the following 448-residue polypeptide: C4-dicarboxylate transport protein (448 aa).

The next 9 membrane-spanning stretches (helical) occupy residues 13–33 (SLYAQVIFAVTIGVLLGHFYP), 49–69 (LIKMIIAPIIFCTVVVGIAGM), 81–101 (LALLYFEVMSTLALVVGLLVV), 149–169 (AFAKGEILQVLLFSVLFGFAL), 193–213 (IVGIIMKVAPIGAFGAMAFTI), 227–247 (LMGAFYLTCLIFVFGVLGIVS), 294–314 (VVGLVIPTGYSFNLDGTSIYL), 336–356 (TLLAVLLLTSKGAAGVTGSGF), and 357–377 (IVLAATLSAVGGVPVAGLALI).

It belongs to the dicarboxylate/amino acid:cation symporter (DAACS) (TC 2.A.23) family.

The protein resides in the cell inner membrane. Responsible for the transport of dicarboxylates such as succinate, fumarate, and malate from the periplasm across the membrane. The sequence is that of C4-dicarboxylate transport protein from Albidiferax ferrireducens (strain ATCC BAA-621 / DSM 15236 / T118) (Rhodoferax ferrireducens).